The sequence spans 454 residues: Isthmin-1 (454 aa).

The first 29 residues, 1 to 29 (MVRLAAELLLLLGLLLLTLHITVLRGSGA), serve as a signal peptide directing secretion. Disordered stretches follow at residues 29–93 (ASDR…PRSF), 125–144 (PDSE…WSLP), and 161–209 (TNSG…STDG). A compositionally biased stretch (polar residues) spans 38–55 (GNNNLNLESDSTSETSFP). Residues 128–137 (EAEKDQHPEN) are compositionally biased toward basic and acidic residues. Positions 208-252 (DGEGDWSLWSVCSVTCGNGNQKRTRSCGYACIATESRTCDRPNCP) constitute a TSP type-1 domain. 3 cysteine pairs are disulfide-bonded: C219–C246, C223–C251, and C234–C238. Residues 279-442 (LFEVDMDSCE…QKCTESPSDE (164 aa)) enclose the AMOP domain.

The protein belongs to the isthmin family. In terms of assembly, interacts with integrin ITGAV/ITGB5.

The protein resides in the secreted. In terms of biological role, acts as an angiogenesis inhibitor. The chain is Isthmin-1 (Ism1) from Mus musculus (Mouse).